A 425-amino-acid polypeptide reads, in one-letter code: uncharacterized protein (425 aa).

An F-box domain is found at 2 to 53 (SFNLLDLPIVPRQKALKYLEPIDLFELSLCSKRMAQSVRDLKIEASAHFITL).

This is an uncharacterized protein from Caenorhabditis elegans.